We begin with the raw amino-acid sequence, 395 residues long: Multiple organellar RNA editing factor 8, chloroplastic/mitochondrial (395 aa).

A chloroplast and mitochondrion-targeting transit peptide spans 1–56 (MATHTISRSILCRPAKSLSFLFTRSFASSAPLAKSPASSLLSRSRPLVAAFSSVFR). Basic and acidic residues predominate over residues 211–236 (ANERNRRNDRPRNNDRSRNFERRREN). Positions 211–395 (ANERNRRNDR…RDGSGNPYQG (185 aa)) are disordered. Over residues 240–300 (GPPPQRPPMG…GPRHPPPYGA (61 aa)) the composition is skewed to pro residues. A compositionally biased stretch (low complexity) spans 313 to 334 (QNYGGTPPPNYGGAPPANNMGG). Positions 335 to 355 (APPPNYGGGPPPQYGAVPPPQ) are enriched in pro residues. The segment covering 356 to 385 (YGGAPPQNNNYQQQGSGMQQPQYQNNYPPN) has biased composition (low complexity).

The protein belongs to the MORF family. Interacts with protoporphyrinogen oxidase 1 PPOX1. Interacts with PCMP-H52/MEF10. Homodimer and heterodimers with MORF1/RIP8, MORF2/RIP2, MORF3/RIP3, MORF4/RIP4, MORF5/RIP5, MORF6/RIP6 and MORF7/RIP7. Interacts with RBG3/ORRM3. Interacts with PCMP-A2/PMD1. Interacts with ORRM1 and VAT3/OZ1. Interacts with PCMP-H13/MEF35. Interacts with RBG5/ORRM4. Interacts with ORRM6.

It localises to the mitochondrion. The protein resides in the plastid. The protein localises to the chloroplast. In terms of biological role, involved in organellar RNA editing. Required for the processing of numerous RNA editing sites in mitochondria and plastids. Binds to the plastid RARE1 factor, a pentatricopeptide repeat-containing protein involved in RNA editing. The protein is Multiple organellar RNA editing factor 8, chloroplastic/mitochondrial of Arabidopsis thaliana (Mouse-ear cress).